The following is a 297-amino-acid chain: Protease HtpX homolog (297 aa).

The chain crosses the membrane as a helical span at residues 16–36 (IFMAIGFLVGGMAGMILAFVV). Residue His-134 coordinates Zn(2+). Glu-135 is a catalytic residue. His-138 is a Zn(2+) binding site. Helical transmembrane passes span 147 to 167 (MTVT…ALFF) and 175 to 195 (IGSI…QMAI). Zn(2+) is bound at residue Glu-200.

The protein belongs to the peptidase M48B family. Zn(2+) serves as cofactor.

The protein resides in the cell inner membrane. The polypeptide is Protease HtpX homolog (Hyphomonas neptunium (strain ATCC 15444)).